The chain runs to 232 residues: 26S proteasome non-ATPase regulatory subunit 10 (232 aa).

6 ANK repeats span residues 45–75 (DERT…SPNT), 79–108 (GGWT…DPNT), 112–141 (SKRT…KNRK), 144–173 (TGSA…NINS), 177–206 (EGDT…DTTI), and 210–232 (DSKT…EFKK).

In terms of biological role, acts as a chaperone during the assembly of the 26S proteasome, specifically of the 19S regulatory complex (RC). The sequence is that of 26S proteasome non-ATPase regulatory subunit 10 (psmD10) from Dictyostelium discoideum (Social amoeba).